The primary structure comprises 736 residues: Dynamin-1-like protein (736 aa).

Met1 is modified (N-acetylmethionine). The region spanning 22–302 (IIQLPQIVVV…LMHHIRDCLP (281 aa)) is the Dynamin-type G domain. Residues 32 to 39 (GTQSSGKS) form a G1 motif region. 32–40 (GTQSSGKSS) lines the GTP pocket. Positions 58–60 (VTR) are G2 motif. Residues 146–149 (DLPG) are G3 motif. The G4 motif stretch occupies residues 215 to 218 (TKLD). GTP contacts are provided by residues 215–221 (TKLDLMD) and 246–249 (NRSQ). The G5 motif stretch occupies residues 245–248 (VNRS). The interval 344–489 (YCNTIEGTAK…NEMVHNLVAI (146 aa)) is middle domain. The interaction with GSK3B stretch occupies residues 448–685 (NYSTQELLRF…NHVKDTLQSE (238 aa)). The tract at residues 502-569 (ADACGLMNNN…IQDSRRETKN (68 aa)) is b domain. The disordered stretch occupies residues 523–590 (ELPSAVSRDK…VQEPTTGNWR (68 aa)). Ser529 carries the phosphoserine modification. Glycyl lysine isopeptide (Lys-Gly) (interchain with G-Cter in SUMO) cross-links involve residues Lys532 and Lys535. Residues 537–554 (PSALAPASQEPSPAASAE) are compositionally biased toward low complexity. Residue Ser548 is modified to Phosphoserine. Over residues 555-568 (ADGKLIQDSRRETK) the composition is skewed to basic and acidic residues. Glycyl lysine isopeptide (Lys-Gly) (interchain with G-Cter in SUMO) cross-links involve residues Lys558 and Lys568. 2 O-linked (GlcNAc) threonine glycosylation sites follow: Thr585 and Thr586. A Glycyl lysine isopeptide (Lys-Gly) (interchain with G-Cter in SUMO) cross-link involves residue Lys594. An N6-acetyllysine; alternate modification is found at Lys597. A Glycyl lysine isopeptide (Lys-Gly) (interchain with G-Cter in SUMO); alternate cross-link involves residue Lys597. A Glycyl lysine isopeptide (Lys-Gly) (interchain with G-Cter in SUMO) cross-link involves residue Lys606. Phosphoserine is present on Ser607. A Glycyl lysine isopeptide (Lys-Gly) (interchain with G-Cter in SUMO) cross-link involves residue Lys608. Ser616 carries the phosphoserine; by CDK1 and PINK1 modification. Ser637 bears the Phosphoserine; by CAMK1 and PKA mark. At Cys644 the chain carries S-nitrosocysteine. The 92-residue stretch at 644–735 (CEVIERLIKS…IIAEIRETHL (92 aa)) folds into the GED domain. The interval 654–668 (YFLIVRKNIQDSVPK) is important for homodimerization.

The protein belongs to the TRAFAC class dynamin-like GTPase superfamily. Dynamin/Fzo/YdjA family. In terms of assembly, homotetramer; dimerizes through the N-terminal GTP-middle region of one molecule binding to the GED domain of another DNM1L molecule. Oligomerizes in a GTP-dependent manner to form membrane-associated tubules with a spiral pattern. Interacts with GSK3B and MARCHF5. Interacts (via the GTPase and B domains) with UBE2I; the interaction promotes sumoylation of DNM1L, mainly in its B domain. Interacts with PPP3CA; the interaction dephosphorylates DNM1L and regulates its transition to mitochondria. Interacts with BCL2L1 isoform BCL-X(L) and CLTA; DNM1L and BCL2L1 isoform BCL-X(L) may form a complex in synaptic vesicles that also contains clathrin and MFF. Interacts with MFF; the interaction is inhibited by C11orf65/MFI. Interacts with FIS1; may form part of a larger protein complex at the endoplasmic reticulum-mitochondrial interface during mitochondrial fission. Interacts with CANX. Interacts with BCAP31. Interacts with MIEF2 and MIEF1; GTP-dependent, regulates GTP hydrolysis and DNM1L oligomerization. Interacts with PGAM5; this interaction leads to dephosphorylation at Ser-656 and activation of GTPase activity and eventually to mitochondria fragmentation. Interacts with RALBP1; during mitosis, recruits DNM1L to the mitochondrion and mediates its activation by the mitotic kinase cyclin B-CDK1. Interacts with FUNDC1; this interaction recruits DNM1L/DRP1 at ER-mitochondria contact sites. Phosphorylation/dephosphorylation events on two sites near the GED domain regulate mitochondrial fission. Phosphorylation on Ser-637 by CAMK1 and PKA inhibits the GTPase activity, leading to a defect in mitochondrial fission promoting mitochondrial elongation. Dephosphorylated on this site by PPP3CA which promotes mitochondrial fission. Phosphorylation on Ser-616 by CDK1 and PINK1 activates the GTPase activity and promotes mitochondrial fission. Phosphorylated in a circadian manner at Ser-637. Dephosphorylated by PGAM5. In terms of processing, sumoylated on various lysine residues within the B domain, probably by MUL1. Sumoylation positively regulates mitochondrial fission. Desumoylated by SENP5 during G2/M transition of mitosis. Appears to be linked to its catalytic activity. Post-translationally, S-nitrosylation increases DNM1L dimerization, mitochondrial fission and causes neuronal damage. Ubiquitination by MARCHF5 affects mitochondrial morphology. In terms of processing, O-GlcNAcylation augments the level of the GTP-bound active form of DNM1L and induces translocation from the cytoplasm to mitochondria in cardiomyocytes. It also decreases phosphorylation at Ser-637. As to expression, ubiquitously expressed with highest levels found in skeletal muscles, heart, kidney and brain. Isoform 1 is brain-specific. Isoform 2 and isoform 3 are predominantly expressed in testis and skeletal muscles respectively. Isoform 4 is weakly expressed in brain, heart and kidney. Isoform 5 is dominantly expressed in liver, heart and kidney. Isoform 6 is expressed in neurons.

It is found in the cytoplasm. The protein resides in the cytosol. It localises to the golgi apparatus. Its subcellular location is the endomembrane system. The protein localises to the mitochondrion outer membrane. It is found in the peroxisome. The protein resides in the membrane. It localises to the clathrin-coated pit. Its subcellular location is the cytoplasmic vesicle. The protein localises to the secretory vesicle. It is found in the synaptic vesicle membrane. The enzyme catalyses GTP + H2O = GDP + phosphate + H(+). GTPase activity is increased by binding to phospholipid membranes. Its function is as follows. Functions in mitochondrial and peroxisomal division. Mediates membrane fission through oligomerization into membrane-associated tubular structures that wrap around the scission site to constrict and sever the mitochondrial membrane through a GTP hydrolysis-dependent mechanism. The specific recruitment at scission sites is mediated by membrane receptors like MFF, MIEF1 and MIEF2 for mitochondrial membranes. While the recruitment by the membrane receptors is GTP-dependent, the following hydrolysis of GTP induces the dissociation from the receptors and allows DNM1L filaments to curl into closed rings that are probably sufficient to sever a double membrane. Acts downstream of PINK1 to promote mitochondrial fission in a PRKN-dependent manner. Plays an important role in mitochondrial fission during mitosis. Through its function in mitochondrial division, ensures the survival of at least some types of postmitotic neurons, including Purkinje cells, by suppressing oxidative damage. Required for normal brain development, including that of cerebellum. Facilitates developmentally regulated apoptosis during neural tube formation. Required for a normal rate of cytochrome c release and caspase activation during apoptosis; this requirement may depend upon the cell type and the physiological apoptotic cues. Required for formation of endocytic vesicles. Proposed to regulate synaptic vesicle membrane dynamics through association with BCL2L1 isoform Bcl-X(L) which stimulates its GTPase activity in synaptic vesicles; the function may require its recruitment by MFF to clathrin-containing vesicles. Required for programmed necrosis execution. Rhythmic control of its activity following phosphorylation at Ser-637 is essential for the circadian control of mitochondrial ATP production. Functionally, inhibits peroxisomal division when overexpressed. This Homo sapiens (Human) protein is Dynamin-1-like protein.